The sequence spans 513 residues: ATP synthase subunit alpha 2 (513 aa).

169–176 (GDRQTGKT) contributes to the ATP binding site.

The protein belongs to the ATPase alpha/beta chains family. As to quaternary structure, F-type ATPases have 2 components, CF(1) - the catalytic core - and CF(0) - the membrane proton channel. CF(1) has five subunits: alpha(3), beta(3), gamma(1), delta(1), epsilon(1). CF(0) has three main subunits: a(1), b(2) and c(9-12). The alpha and beta chains form an alternating ring which encloses part of the gamma chain. CF(1) is attached to CF(0) by a central stalk formed by the gamma and epsilon chains, while a peripheral stalk is formed by the delta and b chains.

Its subcellular location is the cell inner membrane. The enzyme catalyses ATP + H2O + 4 H(+)(in) = ADP + phosphate + 5 H(+)(out). In terms of biological role, produces ATP from ADP in the presence of a proton gradient across the membrane. The alpha chain is a regulatory subunit. This chain is ATP synthase subunit alpha 2, found in Photobacterium profundum (strain SS9).